The following is a 402-amino-acid chain: MAKRSLSSLSAEELCGKRVFVRVDFNVPVNAEGDITDDTRIRAALPTIKDLIDKGARVILSAHFGRPKGQVNDAMRLTPVAQRLSELLGHTVIKTDSCIGSDAQAKAQSLNNGDVMLLENVRFIQGEEKNDPDFAKELSELAEVYVNDAFGAAHRAHASTEGVTKFLSPNVAGYLMEKELQYLQGAIDSPKRPLAAIVGGSKVSSKIGVLESLIDKCDKVLIGGGMIFTFYKARGLSVGKSLVEDDKLELAKALEEKAKSKGVELLLPTDVVLADNFSPDANSQIAQINSIPEGWMGLDIGPDSVKLFQDALEDCQTVIWNGPMGVFEFDKFANGTNSIATTLSVLSQKGCCTIIGGGDSVAAVEKAGLADKMSHISTGGGASLELLEGKTLPGVAALDELD.

Substrate contacts are provided by residues 24–26 (DFN), Arg40, 63–66 (HFGR), Arg122, and Arg155. ATP is bound by residues Lys206, Gly297, Glu328, and 357–360 (GGDS).

Belongs to the phosphoglycerate kinase family. Monomer.

Its subcellular location is the cytoplasm. The catalysed reaction is (2R)-3-phosphoglycerate + ATP = (2R)-3-phospho-glyceroyl phosphate + ADP. Its pathway is carbohydrate degradation; glycolysis; pyruvate from D-glyceraldehyde 3-phosphate: step 2/5. The protein is Phosphoglycerate kinase of Prochlorococcus marinus (strain MIT 9211).